The chain runs to 299 residues: Probable alpha-L-glutamate ligase (299 aa).

The 183-residue stretch at 112 to 294 folds into the ATP-grasp domain; sequence LQLLTEQGIA…IALQMIVHIE (183 aa). ATP contacts are provided by residues K148, 185–186, D194, and 218–220; these read DF and RAN. Mg(2+) contacts are provided by D255, E267, and N269. Residues D255, E267, and N269 each contribute to the Mn(2+) site.

This sequence belongs to the RimK family. Requires Mg(2+) as cofactor. It depends on Mn(2+) as a cofactor.

The protein is Probable alpha-L-glutamate ligase of Histophilus somni (strain 129Pt) (Haemophilus somnus).